Consider the following 218-residue polypeptide: Small ribosomal subunit protein uS3c (218 aa).

The region spanning 47 to 118 (VQKEMRISSG…RLNVVITRVA (72 aa)) is the KH type-2 domain.

Belongs to the universal ribosomal protein uS3 family. In terms of assembly, part of the 30S ribosomal subunit.

It is found in the plastid. The protein resides in the chloroplast. The sequence is that of Small ribosomal subunit protein uS3c (rps3) from Ceratophyllum demersum (Rigid hornwort).